The sequence spans 298 residues: GTPase Era (298 aa).

In terms of domain architecture, Era-type G spans 8 to 176 (HCGSVAVIGR…VRDVLKLLPE (169 aa)). Residues 16–23 (GRPNVGKS) form a G1 region. Residue 16 to 23 (GRPNVGKS) participates in GTP binding. Positions 42–46 (QTTRH) are G2. A G3 region spans residues 63 to 66 (DTPG). GTP is bound by residues 63–67 (DTPGL) and 125–128 (NKID). A G4 region spans residues 125–128 (NKID). Residues 155–157 (ISA) form a G5 region. Residues 199 to 283 (VREQLMRQLG…FLETWVRVRE (85 aa)) enclose the KH type-2 domain.

This sequence belongs to the TRAFAC class TrmE-Era-EngA-EngB-Septin-like GTPase superfamily. Era GTPase family. As to quaternary structure, monomer.

The protein resides in the cytoplasm. It localises to the cell inner membrane. An essential GTPase that binds both GDP and GTP, with rapid nucleotide exchange. Plays a role in 16S rRNA processing and 30S ribosomal subunit biogenesis and possibly also in cell cycle regulation and energy metabolism. The chain is GTPase Era from Stenotrophomonas maltophilia (strain K279a).